Consider the following 29-residue polypeptide: Potassium channel toxin alpha-KTx 20.1 (29 aa).

3 disulfides stabilise this stretch: Cys2/Cys20, Cys7/Cys24, and Cys11/Cys26.

It belongs to the short scorpion toxin superfamily. Potassium channel inhibitor family. Alpha-KTx 20 subfamily. Expressed by the venom gland.

The protein localises to the secreted. Reduces potassium currents through Kv1.2/KCNA2 and Kv1.3/KCNA3 voltage-gated potassium channels. The polypeptide is Potassium channel toxin alpha-KTx 20.1 (Tityus trivittatus (Argentinean scorpion)).